We begin with the raw amino-acid sequence, 436 residues long: MNYTTQMDAAKKGIITKEMQVVAEKEGINIETLMNLMAEGKIVIPANKNHKSISAEGVGQGLKTKINVNLGISKDCANIELELEKVKKAIDMNAESIMDLSNYGKTYDFRKRLVEVSTAMIGTVPMYDVVGFYDKELKDITVDEFFDVVEKHAKDGVDFVTIHAGLNRETIETFRRNKRLTNIVSRGGSLLFAWMELNNRENPFYEYFDRLLDICEKYDLTLSLGDACRPGSIADATDAVQIKELITLGELTKRAWERNVQVIIEGPGHMAMNEIEANVLLEKKLCHGAPFYVLGPIVTDIAPGYDHITSAIGGAMAASYGADFLCYVTPAEHLRLPNLEDVREGIVATKIAAHAADIAKGISGARDIDNKMSDARKRLDWDEMFSLAIDSEKAIRYRKESTPEHKDSCTMCGKMCSIRNMNKILEGKDINLLRED.

Substrate-binding positions include Asn69, Met98, Tyr127, His163, 185-187 (SRG), 226-229 (DACR), and Glu265. Residue His269 coordinates Zn(2+). Tyr292 is a binding site for substrate. His333 is a Zn(2+) binding site. The [4Fe-4S] cluster site is built by Cys409, Cys412, and Cys416.

It belongs to the ThiC family. The cofactor is [4Fe-4S] cluster.

It carries out the reaction 5-amino-1-(5-phospho-beta-D-ribosyl)imidazole + S-adenosyl-L-methionine = 4-amino-2-methyl-5-(phosphooxymethyl)pyrimidine + CO + 5'-deoxyadenosine + formate + L-methionine + 3 H(+). Its pathway is cofactor biosynthesis; thiamine diphosphate biosynthesis. Its function is as follows. Catalyzes the synthesis of the hydroxymethylpyrimidine phosphate (HMP-P) moiety of thiamine from aminoimidazole ribotide (AIR) in a radical S-adenosyl-L-methionine (SAM)-dependent reaction. This chain is Phosphomethylpyrimidine synthase, found in Clostridium perfringens (strain SM101 / Type A).